A 312-amino-acid chain; its full sequence is Ornithine carbamoyltransferase, catabolic (312 aa).

Residues 57–60 (STRT), glutamine 84, arginine 108, and 135–138 (HPTQ) contribute to the carbamoyl phosphate site. L-ornithine is bound by residues asparagine 167, aspartate 231, and 235–236 (SM). 272–273 (CL) lines the carbamoyl phosphate pocket.

It belongs to the aspartate/ornithine carbamoyltransferase superfamily. OTCase family.

It is found in the cytoplasm. The enzyme catalyses carbamoyl phosphate + L-ornithine = L-citrulline + phosphate + H(+). It functions in the pathway amino-acid degradation; L-arginine degradation via ADI pathway; carbamoyl phosphate from L-arginine: step 2/2. Functionally, reversibly catalyzes the transfer of the carbamoyl group from carbamoyl phosphate (CP) to the N(epsilon) atom of ornithine (ORN) to produce L-citrulline. This Mycoplasma capricolum subsp. capripneumoniae protein is Ornithine carbamoyltransferase, catabolic (arcB).